Consider the following 353-residue polypeptide: Heterogeneous nuclear ribonucleoproteins A2/B1 (353 aa).

M1 is subject to N-acetylmethionine. A Phosphothreonine modification is found at T4. A Glycyl lysine isopeptide (Lys-Gly) (interchain with G-Cter in SUMO2) cross-link involves residue L5. The Nuclear localization signal signature appears at 9 to 15 (PLERKKR). 2 consecutive RRM domains span residues 21-104 (RKLF…ESGK) and 112-191 (KKLF…LSRQ). A Glycyl lysine isopeptide (Lys-Gly) (interchain with G-Cter in SUMO2) cross-link involves residue K22. S29 bears the Phosphoserine mark. Residue R38 is modified to Omega-N-methylarginine. S85 carries the phosphoserine modification. K104 is modified (N6,N6-dimethyllysine; alternate). A Glycyl lysine isopeptide (Lys-Gly) (interchain with G-Cter in SUMO2); alternate cross-link involves residue K104. Residues K112, K120, and K137 each participate in a glycyl lysine isopeptide (Lys-Gly) (interchain with G-Cter in SUMO2) cross-link. T140 is modified (phosphothreonine). S149 is subject to Phosphoserine. K152 participates in a covalent cross-link: Glycyl lysine isopeptide (Lys-Gly) (interchain with G-Cter in SUMO2). T159 bears the Phosphothreonine mark. Residues K168 and K173 each participate in a glycyl lysine isopeptide (Lys-Gly) (interchain with G-Cter in SUMO2); alternate cross-link. K168 and K173 each carry N6-acetyllysine; alternate. The residue at position 176 (T176) is a Phosphothreonine. K186 is covalently cross-linked (Glycyl lysine isopeptide (Lys-Gly) (interchain with G-Cter in SUMO2)). 2 positions are modified to phosphoserine: S189 and S201. Residues 193 to 353 (MQEVQSSRSG…SGGYGGRSRY (161 aa)) are disordered. Positions 202–223 (GRGGNFGFGDSRGGGGNFGPGP) are enriched in gly residues. At R203 the chain carries Asymmetric dimethylarginine; alternate. R203 bears the Dimethylated arginine; alternate mark. R203 bears the Omega-N-methylarginine; alternate mark. The residue at position 212 (S212) is a Phosphoserine. At R213 the chain carries Asymmetric dimethylarginine; alternate. R213 carries the post-translational modification Dimethylated arginine; alternate. Position 213 is an omega-N-methylarginine; alternate (R213). Residue S225 is modified to Phosphoserine. R228 is subject to Omega-N-methylarginine. Phosphoserine occurs at positions 231 and 236. R238 is subject to Omega-N-methylarginine. The residue at position 259 (S259) is a Phosphoserine. R266 is modified (asymmetric dimethylarginine; alternate). An Omega-N-methylarginine; alternate modification is found at R266. A nuclear targeting sequence region spans residues 308-347 (QQPSNYGPMKSGNFGGSRNMGGPYGGGNYGPGGSGGSGGY). Over residues 320–353 (NFGGSRNMGGPYGGGNYGPGGSGGSGGYGGRSRY) the composition is skewed to gly residues. A Phosphoserine modification is found at S324. Position 325 is an omega-N-methylarginine (R325). Phosphotyrosine is present on Y331. Residues S341 and S344 each carry the phosphoserine modification. Phosphotyrosine is present on Y347. R350 is subject to Omega-N-methylarginine.

Homodimer; dimerization is required for nucleocytoplasmic translocation. Identified in the spliceosome C complex. Identified in a IGF2BP1-dependent mRNP granule complex containing untranslated mRNAs. Interacts with IGF2BP1. Interacts with C9orf72. Interacts with DGCR8. Interacts with TARDBP. Interacts with CKAP5. Interacts with TBK1. Interacts with STING1. Interacts with SRC. Interacts with PPIA/CYPA. Interacts (via C-terminus) with FAM76B; the interaction results in retention of HNRNPA2B1 in the nucleus and inhibition of the NF-kappa-B-mediated inflammatory pathway. Interacts with NF-kappa-B inhibitors NFKBIA and NFKBIE; the interaction may be mediated by the RRM2 domain of HNRNPA2B1, and HNRNPA2B1 may interact simultaneously with FAM76B and either NFKBIA or NFKBIE to form a complex. In terms of processing, sumoylated in exosomes, promoting miRNAs-binding. Asymmetric dimethylation at Arg-266 constitutes the major methylation site. According to a report, methylation affects subcellular location and promotes nuclear localization. According to another report, methylation at Arg-266 does not influence nucleocytoplasmic shuttling.

The protein resides in the nucleus. Its subcellular location is the nucleoplasm. It is found in the cytoplasm. The protein localises to the cytoplasmic granule. It localises to the secreted. The protein resides in the extracellular exosome. Heterogeneous nuclear ribonucleoprotein (hnRNP) that associates with nascent pre-mRNAs, packaging them into hnRNP particles. The hnRNP particle arrangement on nascent hnRNA is non-random and sequence-dependent and serves to condense and stabilize the transcripts and minimize tangling and knotting. Packaging plays a role in various processes such as transcription, pre-mRNA processing, RNA nuclear export, subcellular location, mRNA translation and stability of mature mRNAs. Forms hnRNP particles with at least 20 other different hnRNP and heterogeneous nuclear RNA in the nucleus. Involved in transport of specific mRNAs to the cytoplasm in oligodendrocytes and neurons: acts by specifically recognizing and binding the A2RE (21 nucleotide hnRNP A2 response element) or the A2RE11 (derivative 11 nucleotide oligonucleotide) sequence motifs present on some mRNAs, and promotes their transport to the cytoplasm. Specifically binds single-stranded telomeric DNA sequences, protecting telomeric DNA repeat against endonuclease digestion. Also binds other RNA molecules, such as primary miRNA (pri-miRNAs): acts as a nuclear 'reader' of the N6-methyladenosine (m6A) mark by specifically recognizing and binding a subset of nuclear m6A-containing pri-miRNAs. Binding to m6A-containing pri-miRNAs promotes pri-miRNA processing by enhancing binding of DGCR8 to pri-miRNA transcripts. Involved in miRNA sorting into exosomes following sumoylation, possibly by binding (m6A)-containing pre-miRNAs. Acts as a regulator of efficiency of mRNA splicing, possibly by binding to m6A-containing pre-mRNAs. Plays a role in the splicing of pyruvate kinase PKM by binding repressively to sequences flanking PKM exon 9, inhibiting exon 9 inclusion and resulting in exon 10 inclusion and production of the PKM M2 isoform. Also plays a role in the activation of the innate immune response. Mechanistically, senses the presence of viral DNA in the nucleus, homodimerizes and is demethylated by JMJD6. In turn, translocates to the cytoplasm where it activates the TBK1-IRF3 pathway, leading to interferon alpha/beta production. Its function is as follows. (Microbial infection) Involved in the transport of HIV-1 genomic RNA out of the nucleus, to the microtubule organizing center (MTOC), and then from the MTOC to the cytoplasm: acts by specifically recognizing and binding the A2RE (21 nucleotide hnRNP A2 response element) sequence motifs present on HIV-1 genomic RNA, and promotes its transport. The sequence is that of Heterogeneous nuclear ribonucleoproteins A2/B1 (HNRNPA2B1) from Homo sapiens (Human).